The sequence spans 183 residues: dCTP deaminase, dUMP-forming (183 aa).

DCTP-binding positions include Lys99–Arg104, Asp117, Thr125–Glu127, Gln146, Tyr159, Lys166, and Gln170. Glu127 functions as the Proton donor/acceptor in the catalytic mechanism.

The protein belongs to the dCTP deaminase family. In terms of assembly, homotrimer.

It catalyses the reaction dCTP + 2 H2O = dUMP + NH4(+) + diphosphate. Its pathway is pyrimidine metabolism; dUMP biosynthesis; dUMP from dCTP: step 1/1. Its function is as follows. Bifunctional enzyme that catalyzes both the deamination of dCTP to dUTP and the hydrolysis of dUTP to dUMP without releasing the toxic dUTP intermediate. The polypeptide is dCTP deaminase, dUMP-forming (Methanoregula boonei (strain DSM 21154 / JCM 14090 / 6A8)).